Consider the following 478-residue polypeptide: MDTSDLFASCRKGDVGRVRYLLEQRDVEVNVRDKWDSTPLYYACLCGHEELVRYLLANGARCEANTFDGERCLYGALSDPIRRALRDYKQVTASCRRRDYYDDFLQRLLEQGIHSDVVFVVHGKPFRAHRCILGARSTYFANMLDTKWKGKSVVVLRHPLINPVAFGALLQYLYTGRLDIGVEHVSDCERLAKQCQLWDLLDDLEAKCEKVSEFVASKPGTCVKVLTIEPPPADPRLRADMALLADCALPSELRGDLGELPFPCPDGFSSCPDICFRVADSSFLCHKAFFCGRSDYFRALLDDHFQESEEPAASGDPPVVTLHDISPDIFIHVLYYVYSDHTELPPELAYDVLSVADMYLLPGLKRLCGRSLAQLLEEDSVVGVWRIAKMFRLARLEDQCTEYMAKVIEKLVEREDFVEAVREEAAAVAARQETDSIPLVDDIRFHVASTVQTYSAIEEAQQRLRALEDLLVSIGLDC.

ANK repeat units follow at residues 1 to 31 (MDTSDLFASCRKGDVGRVRYLLEQRDVEVNV) and 35 to 64 (WDSTPLYYACLCGHEELVRYLLANGARCEA). BTB domains follow at residues 115–182 (SDVV…DIGV) and 272–346 (PDIC…ELPP). The stretch at 451 to 477 (VQTYSAIEEAQQRLRALEDLLVSIGLD) forms a coiled coil.

The protein localises to the cytoplasm. Its function is as follows. May act as a mediator of the PTEN growth-suppressive signaling pathway. May play a role in developmental processes. In Mus musculus (Mouse), this protein is Ankyrin repeat and BTB/POZ domain-containing protein 1.